The following is a 370-amino-acid chain: Chloromuconate cycloisomerase (370 aa).

Lysine 165 acts as the Proton acceptor in catalysis. Residues aspartate 194, glutamate 220, and aspartate 245 each contribute to the Mn(2+) site. Glutamate 323 acts as the Proton donor in catalysis.

The protein belongs to the mandelate racemase/muconate lactonizing enzyme family. Requires Mn(2+) as cofactor.

It catalyses the reaction 2-[(2R)-2-chloro-2,5-dihydro-5-oxofuryl]acetate = 3-chloro-cis,cis-muconate + H(+). Its pathway is aromatic compound metabolism; 3-chlorocatechol degradation. In Pseudomonas sp. (strain P51), this protein is Chloromuconate cycloisomerase (tcbD).